The chain runs to 1028 residues: Contactin-6 (1028 aa).

The signal sequence occupies residues 1 to 19 (MRLLWKLVILLPLINSSAG). Ig-like C2-type domains are found at residues 26–117 (PIFT…AKLQ), 122–208 (EDFE…RSVQ), 227–308 (PKIE…RNLA), 318–402 (PEWE…AELR), 408–495 (PDFS…GSLI), and 499–587 (RTVI…ESLS). Cystine bridges form between Cys50–Cys100, Cys144–Cys196, Cys249–Cys297, Cys339–Cys386, Cys431–Cys479, and Cys521–Cys577. N-linked (GlcNAc...) asparagine glycans are attached at residues Asn65 and Asn193. N-linked (GlcNAc...) asparagine glycans are attached at residues Asn368, Asn377, and Asn468. Fibronectin type-III domains are found at residues 600–698 (PPED…TKAS), 703–800 (APVN…SGED), 805–901 (APRG…TKKS), and 902–996 (PPSQ…KMSS). N-linked (GlcNAc...) asparagine glycosylation is found at Asn659, Asn765, Asn860, and Asn865. Tyr882 carries the post-translational modification Phosphotyrosine. The segment covering 887-902 (TGPSSPPVNVTTKKSP) has biased composition (polar residues). The segment at 887-908 (TGPSSPPVNVTTKKSPPSQPPA) is disordered. Residues Asn895, Asn931, Asn956, and Asn957 are each glycosylated (N-linked (GlcNAc...) asparagine). A lipid anchor (GPI-anchor amidated serine) is attached at Ser999. The propeptide at 1000–1028 (RGIQFLEPSTHFLSIVIVIFHCFAIQPLI) is removed in mature form.

Belongs to the immunoglobulin superfamily. Contactin family. Interacts with PTPRG. Expressed in nervous system. Highly expressed in cerebellum. Expressed at intermediate level in thalamus, subthalamic nucleus. Weakly expressed in corpus callosum, caudate nucleus and spinal cord.

The protein localises to the cell membrane. In terms of biological role, contactins mediate cell surface interactions during nervous system development. Participates in oligodendrocytes generation by acting as a ligand of NOTCH1. Its association with NOTCH1 promotes NOTCH1 activation through the released notch intracellular domain (NICD) and subsequent translocation to the nucleus. Involved in motor coordination. This is Contactin-6 (CNTN6) from Homo sapiens (Human).